We begin with the raw amino-acid sequence, 232 residues long: Ashwin (232 aa).

5 positions are modified to phosphoserine: Ser112, Ser182, Ser184, Ser189, and Ser193. The disordered stretch occupies residues 163 to 232 (KMEHNNNDTQ…KRKIQHVTWP (70 aa)). Residues Thr197 and Thr198 each carry the phosphothreonine modification. Positions 206–224 (APKEEAEATNHLKPPEVKR) are enriched in basic and acidic residues.

Belongs to the ashwin family. Component of the tRNA-splicing ligase complex.

The protein resides in the nucleus. The chain is Ashwin from Mus musculus (Mouse).